The sequence spans 242 residues: Uridylate kinase (242 aa).

An ATP-binding site is contributed by 15–18 (KLSG). The tract at residues 23–28 (GDEGFG) is involved in allosteric activation by GTP. Residue G57 participates in UMP binding. The ATP site is built by G58 and R62. Residues D77 and 138–145 (TGNPFCTT) each bind UMP. ATP is bound by residues T165, Y171, and D174.

The protein belongs to the UMP kinase family. Homohexamer.

The protein localises to the cytoplasm. It catalyses the reaction UMP + ATP = UDP + ADP. It functions in the pathway pyrimidine metabolism; CTP biosynthesis via de novo pathway; UDP from UMP (UMPK route): step 1/1. Allosterically activated by GTP. Inhibited by UTP. In terms of biological role, catalyzes the reversible phosphorylation of UMP to UDP. The polypeptide is Uridylate kinase (Shewanella sp. (strain ANA-3)).